Reading from the N-terminus, the 363-residue chain is UDP-3-O-acylglucosamine N-acyltransferase (363 aa).

The Proton acceptor role is filled by His266.

It belongs to the transferase hexapeptide repeat family. LpxD subfamily. Homotrimer.

It carries out the reaction a UDP-3-O-[(3R)-3-hydroxyacyl]-alpha-D-glucosamine + a (3R)-hydroxyacyl-[ACP] = a UDP-2-N,3-O-bis[(3R)-3-hydroxyacyl]-alpha-D-glucosamine + holo-[ACP] + H(+). It functions in the pathway bacterial outer membrane biogenesis; LPS lipid A biosynthesis. In terms of biological role, catalyzes the N-acylation of UDP-3-O-acylglucosamine using 3-hydroxyacyl-ACP as the acyl donor. Is involved in the biosynthesis of lipid A, a phosphorylated glycolipid that anchors the lipopolysaccharide to the outer membrane of the cell. The sequence is that of UDP-3-O-acylglucosamine N-acyltransferase from Bordetella bronchiseptica (strain ATCC BAA-588 / NCTC 13252 / RB50) (Alcaligenes bronchisepticus).